Reading from the N-terminus, the 584-residue chain is A-type ATP synthase subunit A (584 aa).

Residue 233–240 participates in ATP binding; the sequence is GPFGSGKT.

Belongs to the ATPase alpha/beta chains family. In terms of assembly, has multiple subunits with at least A(3), B(3), C, D, E, F, H, I and proteolipid K(x).

Its subcellular location is the cell membrane. It catalyses the reaction ATP + H2O + 4 H(+)(in) = ADP + phosphate + 5 H(+)(out). Component of the A-type ATP synthase that produces ATP from ADP in the presence of a proton gradient across the membrane. The A chain is the catalytic subunit. This chain is A-type ATP synthase subunit A, found in Methanothermobacter thermautotrophicus (strain ATCC 29096 / DSM 1053 / JCM 10044 / NBRC 100330 / Delta H) (Methanobacterium thermoautotrophicum).